Here is a 299-residue protein sequence, read N- to C-terminus: Probable lipid kinase YegS (299 aa).

One can recognise a DAGKc domain in the interval 2-133 (ANFPASLLIL…IDMARVNDKT (132 aa)). Residues Thr-40, 66-72 (GDGTINE), and Thr-95 contribute to the ATP site. Mg(2+) is bound by residues Leu-215, Asp-218, and Leu-220. The active-site Proton acceptor is the Glu-271.

It belongs to the diacylglycerol/lipid kinase family. YegS lipid kinase subfamily. The cofactor is Mg(2+). Ca(2+) is required as a cofactor.

It localises to the cytoplasm. In terms of biological role, probably phosphorylates lipids; the in vivo substrate is unknown. The chain is Probable lipid kinase YegS from Salmonella paratyphi A (strain ATCC 9150 / SARB42).